A 440-amino-acid polypeptide reads, in one-letter code: Nitrilase and fragile histidine triad fusion protein NitFhit (440 aa).

A CN hydrolase domain is found at 14–264 (RHFIAVCQMT…VDMCFAEIDL (251 aa)). Catalysis depends on residues glutamate 54, lysine 127, and cysteine 169. Residues 297–405 (GGLKFARFNI…LPRRAGDFGD (109 aa)) form the HIT domain. The Histidine triad motif motif lies at 390–394 (HVHIH). Residue histidine 392 is the Tele-AMP-histidine intermediate of the active site.

The protein in the N-terminal section; belongs to the UPF0012 family. As to quaternary structure, homotetramer. The cofactor is Mn(2+).

The enzyme catalyses P(1),P(3)-bis(5'-adenosyl) triphosphate + H2O = AMP + ADP + 2 H(+). Cleaves A-5'-PPP-5'A to yield AMP and ADP. The chain is Nitrilase and fragile histidine triad fusion protein NitFhit from Caenorhabditis elegans.